Consider the following 63-residue polypeptide: Large ribosomal subunit protein uL29 (63 aa).

It belongs to the universal ribosomal protein uL29 family.

The protein is Large ribosomal subunit protein uL29 of Photobacterium profundum (strain SS9).